Consider the following 239-residue polypeptide: Purine nucleoside phosphorylase DeoD-type (239 aa).

Histidine 5 lines the a purine D-ribonucleoside pocket. Residues glycine 21, arginine 25, arginine 44, and 89–92 (RVGS) contribute to the phosphate site. A purine D-ribonucleoside is bound by residues 180–182 (EME) and 204–205 (SD). Aspartate 205 acts as the Proton donor in catalysis.

The protein belongs to the PNP/UDP phosphorylase family. As to quaternary structure, homohexamer; trimer of homodimers.

The catalysed reaction is a purine D-ribonucleoside + phosphate = a purine nucleobase + alpha-D-ribose 1-phosphate. It carries out the reaction a purine 2'-deoxy-D-ribonucleoside + phosphate = a purine nucleobase + 2-deoxy-alpha-D-ribose 1-phosphate. Catalyzes the reversible phosphorolytic breakdown of the N-glycosidic bond in the beta-(deoxy)ribonucleoside molecules, with the formation of the corresponding free purine bases and pentose-1-phosphate. The polypeptide is Purine nucleoside phosphorylase DeoD-type (Klebsiella pneumoniae).